The following is a 359-amino-acid chain: Cytochrome c oxidase subunit 2 (359 aa).

The signal sequence occupies residues 1 to 28 (MEQQNKRGLKRKALLGGVLGLGGLAMAG). The S-diacylglycerol cysteine moiety is linked to residue cysteine 29. 2 helical membrane-spanning segments follow: residues 64 to 84 (VWVAAWIIGIIMWGLFLTAIF) and 107 to 127 (VPLELVLTIVPIIIVMVLFFF). Residues 168–203 (PGGQDYQGSDPERQAAAEASKKDPSGDNPIHGNSKS) form a disordered region. Over residues 177–192 (DPERQAAAEASKKDPS) the composition is skewed to basic and acidic residues. Cu cation-binding residues include histidine 244, cysteine 285, glutamate 287, cysteine 289, histidine 293, and methionine 296. The tract at residues 335 to 359 (YATSTSPFVSDRTATRDGENTQSNA) is disordered.

In terms of assembly, associates with subunits I, III and IV to form cytochrome c oxidase. The 4 subunit cytochrome c oxidase forms a supercomplex with the menaquinol-cytochrome c reductase complex (cytochrome bc1). It depends on binuclear copper center (CuA) as a cofactor.

Its subcellular location is the cell membrane. It carries out the reaction 4 Fe(II)-[cytochrome c] + O2 + 8 H(+)(in) = 4 Fe(III)-[cytochrome c] + 2 H2O + 4 H(+)(out). Functionally, subunits I and II form the functional core of the enzyme complex. Electrons originating in cytochrome c are transferred via heme a and Cu(A) to the binuclear center formed by heme a3 and Cu(B). The polypeptide is Cytochrome c oxidase subunit 2 (ctaC) (Corynebacterium glutamicum (strain ATCC 13032 / DSM 20300 / JCM 1318 / BCRC 11384 / CCUG 27702 / LMG 3730 / NBRC 12168 / NCIMB 10025 / NRRL B-2784 / 534)).